The sequence spans 872 residues: Cilia- and flagella-associated protein 58 (872 aa).

Coiled coils occupy residues 106–595 (VDSA…ADGE) and 642–839 (ESQY…QKNK).

It belongs to the CFAP58 family. As to quaternary structure, interacts with ODFP2.

It localises to the cell projection. It is found in the cilium. The protein resides in the flagellum. The protein localises to the cytoplasm. Its subcellular location is the cytoskeleton. It localises to the microtubule organizing center. It is found in the centrosome. In terms of biological role, has an essential role in the assembly and organization of the sperm flagellar axoneme. Required for the elongation of the primary cilium and sperm flagellar midpiece via modulation of the Notch signaling pathway. This chain is Cilia- and flagella-associated protein 58, found in Homo sapiens (Human).